We begin with the raw amino-acid sequence, 904 residues long: Patched domain-containing protein 4 (904 aa).

The helical transmembrane segment at 41-61 (HPVFFLTVPAVLTITFGLSAL) threads the bilayer. Residue asparagine 149 is glycosylated (N-linked (GlcNAc...) asparagine). The SSD domain maps to 291–450 (TRSKVLVSLV…FSFFGSCLVF (160 aa)). Helical transmembrane passes span 295-312 (VLVS…SSSM), 323-343 (GLLG…IFFI), 351-371 (TLLG…FELL), 394-414 (VMVT…MGAS), 431-451 (VSIL…LVFA), and 523-543 (PFVV…CLQI). The N-linked (GlcNAc...) asparagine glycan is linked to asparagine 625. Helical transmembrane passes span 718-738 (PVLI…FLVI), 744-764 (FWLI…MTLW), and 771-791 (ISIL…APLL). An N-linked (GlcNAc...) asparagine glycan is attached at asparagine 820. 2 helical membrane-spanning segments follow: residues 823 to 843 (SFLI…FTLF) and 845 to 865 (CLLL…PVFL).

It belongs to the patched family.

It localises to the membrane. In terms of biological role, could act as a repressor of canonical hedgehog signaling by antagonizing the effects of SMO, as suggested by down-regulation of hedgehog target genes, including GLI1, PTCH1, and PTCH2 in PTCHD4-expressing cells. The chain is Patched domain-containing protein 4 (Ptchd4) from Mus musculus (Mouse).